A 241-amino-acid polypeptide reads, in one-letter code: MEGVFTYLGGILGEDSHSAVLIAHLLLVAVIVIMIAKMATKSFRAVPNGTQNVMEAYLGGVVAMGKDVIGEELARKYLPLVAAVGLFIFVSNVIGIIPGFESPTSNINVTLPLALMVFVYYNYEGIKKHGVVHYFAHFAGPVKLLAPLMFPIEIVSHLSRIISLSFRLFGNIKGDDLFLWVLLMLVPFVAPLPAYLLLTFSALLQTFVFMILIYVYLAGAVAIDEEHEKAPAPAIDTMGAV.

6 helical membrane-spanning segments follow: residues 19-39 (AVLIAHLLLVAVIVIMIAKMA), 80-100 (LVAAVGLFIFVSNVIGIIPGF), 106-126 (NINVTLPLALMVFVYYNYEGI), 135-155 (FAHFAGPVKLLAPLMFPIEIV), 177-197 (LFLWVLLMLVPFVAPLPAYLL), and 203-223 (LLQTFVFMILIYVYLAGAVAI).

This sequence belongs to the ATPase A chain family. F-type ATPases have 2 components, CF(1) - the catalytic core - and CF(0) - the membrane proton channel. CF(1) has five subunits: alpha(3), beta(3), gamma(1), delta(1), epsilon(1). CF(0) has three main subunits: a(1), b(2) and c(9-12). The alpha and beta chains form an alternating ring which encloses part of the gamma chain. CF(1) is attached to CF(0) by a central stalk formed by the gamma and epsilon chains, while a peripheral stalk is formed by the delta and b chains.

Its subcellular location is the cell inner membrane. Functionally, key component of the proton channel; it plays a direct role in the translocation of protons across the membrane. The chain is ATP synthase subunit a from Sulfurovum sp. (strain NBC37-1).